We begin with the raw amino-acid sequence, 162 residues long: tRNA (cytidine(34)-2'-O)-methyltransferase (162 aa).

The S-adenosyl-L-methionine site is built by Leu-83, Gly-105, Ile-127, and Ser-135.

This sequence belongs to the class IV-like SAM-binding methyltransferase superfamily. RNA methyltransferase TrmH family. TrmL subfamily. Homodimer.

The protein resides in the cytoplasm. It carries out the reaction cytidine(34) in tRNA + S-adenosyl-L-methionine = 2'-O-methylcytidine(34) in tRNA + S-adenosyl-L-homocysteine + H(+). The catalysed reaction is 5-carboxymethylaminomethyluridine(34) in tRNA(Leu) + S-adenosyl-L-methionine = 5-carboxymethylaminomethyl-2'-O-methyluridine(34) in tRNA(Leu) + S-adenosyl-L-homocysteine + H(+). Methylates the ribose at the nucleotide 34 wobble position in the two leucyl isoacceptors tRNA(Leu)(CmAA) and tRNA(Leu)(cmnm5UmAA). Catalyzes the methyl transfer from S-adenosyl-L-methionine to the 2'-OH of the wobble nucleotide. This chain is tRNA (cytidine(34)-2'-O)-methyltransferase, found in Yersinia pestis.